The primary structure comprises 374 residues: UDP-N-acetylglucosamine--N-acetylmuramyl-(pentapeptide) pyrophosphoryl-undecaprenol N-acetylglucosamine transferase (374 aa).

UDP-N-acetyl-alpha-D-glucosamine contacts are provided by residues 13–15, Asn124, Arg165, Ser193, and Gln294; that span reads TGG.

It belongs to the glycosyltransferase 28 family. MurG subfamily.

Its subcellular location is the cell inner membrane. It carries out the reaction di-trans,octa-cis-undecaprenyl diphospho-N-acetyl-alpha-D-muramoyl-L-alanyl-D-glutamyl-meso-2,6-diaminopimeloyl-D-alanyl-D-alanine + UDP-N-acetyl-alpha-D-glucosamine = di-trans,octa-cis-undecaprenyl diphospho-[N-acetyl-alpha-D-glucosaminyl-(1-&gt;4)]-N-acetyl-alpha-D-muramoyl-L-alanyl-D-glutamyl-meso-2,6-diaminopimeloyl-D-alanyl-D-alanine + UDP + H(+). Its pathway is cell wall biogenesis; peptidoglycan biosynthesis. Functionally, cell wall formation. Catalyzes the transfer of a GlcNAc subunit on undecaprenyl-pyrophosphoryl-MurNAc-pentapeptide (lipid intermediate I) to form undecaprenyl-pyrophosphoryl-MurNAc-(pentapeptide)GlcNAc (lipid intermediate II). In Sinorhizobium medicae (strain WSM419) (Ensifer medicae), this protein is UDP-N-acetylglucosamine--N-acetylmuramyl-(pentapeptide) pyrophosphoryl-undecaprenol N-acetylglucosamine transferase.